The primary structure comprises 142 residues: HTH-type transcriptional regulator MntR (142 aa).

In terms of domain architecture, HTH dtxR-type spans 1-63 (MPTPSMEDYI…YEKYRGLVLT (63 aa)). Mn(2+) contacts are provided by aspartate 8, glutamate 11, histidine 77, glutamate 99, glutamate 102, and histidine 103.

Belongs to the DtxR/MntR family. Homodimer.

The protein resides in the cytoplasm. DNA binding is strongly activated by Mn(2+). Its function is as follows. Central regulator of manganese homeostasis. The polypeptide is HTH-type transcriptional regulator MntR (Bacillus cytotoxicus (strain DSM 22905 / CIP 110041 / 391-98 / NVH 391-98)).